We begin with the raw amino-acid sequence, 344 residues long: Glycerol-3-phosphate dehydrogenase [NAD(P)+] (344 aa).

Ser-23, Trp-24, Arg-44, and Lys-118 together coordinate NADPH. 3 residues coordinate sn-glycerol 3-phosphate: Lys-118, Gly-147, and Thr-149. Position 151 (Ala-151) interacts with NADPH. Sn-glycerol 3-phosphate is bound by residues Lys-202, Asp-255, Ser-265, Arg-266, and Asn-267. The Proton acceptor role is filled by Lys-202. Arg-266 is a binding site for NADPH. Position 292 (Glu-292) interacts with NADPH.

It belongs to the NAD-dependent glycerol-3-phosphate dehydrogenase family.

The protein localises to the cytoplasm. The catalysed reaction is sn-glycerol 3-phosphate + NAD(+) = dihydroxyacetone phosphate + NADH + H(+). The enzyme catalyses sn-glycerol 3-phosphate + NADP(+) = dihydroxyacetone phosphate + NADPH + H(+). The protein operates within membrane lipid metabolism; glycerophospholipid metabolism. In terms of biological role, catalyzes the reduction of the glycolytic intermediate dihydroxyacetone phosphate (DHAP) to sn-glycerol 3-phosphate (G3P), the key precursor for phospholipid synthesis. The protein is Glycerol-3-phosphate dehydrogenase [NAD(P)+] of Nitrosococcus oceani (strain ATCC 19707 / BCRC 17464 / JCM 30415 / NCIMB 11848 / C-107).